Reading from the N-terminus, the 608-residue chain is Isocitrate dehydrogenase kinase/phosphatase (608 aa).

ATP-binding positions include 327–333 (APGIKGL) and lysine 348. Aspartate 383 is a catalytic residue. The tract at residues 589-608 (FDSTPDAGDGDSAGDAQRAA) is disordered.

Belongs to the AceK family.

It is found in the cytoplasm. It catalyses the reaction L-seryl-[isocitrate dehydrogenase] + ATP = O-phospho-L-seryl-[isocitrate dehydrogenase] + ADP + H(+). Its function is as follows. Bifunctional enzyme which can phosphorylate or dephosphorylate isocitrate dehydrogenase (IDH) on a specific serine residue. This is a regulatory mechanism which enables bacteria to bypass the Krebs cycle via the glyoxylate shunt in response to the source of carbon. When bacteria are grown on glucose, IDH is fully active and unphosphorylated, but when grown on acetate or ethanol, the activity of IDH declines drastically concomitant with its phosphorylation. The protein is Isocitrate dehydrogenase kinase/phosphatase of Burkholderia ambifaria (strain MC40-6).